We begin with the raw amino-acid sequence, 235 residues long: tRNA pseudouridine synthase B (235 aa).

Aspartate 48 acts as the Nucleophile in catalysis.

This sequence belongs to the pseudouridine synthase TruB family. Type 1 subfamily.

The enzyme catalyses uridine(55) in tRNA = pseudouridine(55) in tRNA. In terms of biological role, responsible for synthesis of pseudouridine from uracil-55 in the psi GC loop of transfer RNAs. This Phocaeicola vulgatus (strain ATCC 8482 / DSM 1447 / JCM 5826 / CCUG 4940 / NBRC 14291 / NCTC 11154) (Bacteroides vulgatus) protein is tRNA pseudouridine synthase B.